Reading from the N-terminus, the 160-residue chain is Cytochrome c-type biogenesis protein CcmE (160 aa).

Residues 1–7 (MTRKQRR) lie on the Cytoplasmic side of the membrane. Residues 8–28 (LFMIFGALGTLGVAVGLILFA) form a helical; Signal-anchor for type II membrane protein membrane-spanning segment. The Periplasmic portion of the chain corresponds to 29 to 160 (LSDNIVFFYG…TQGAAAPLIR (132 aa)). His-122 and Tyr-126 together coordinate heme. The interval 140–160 (VWQEDGQAKPATQGAAAPLIR) is disordered.

The protein belongs to the CcmE/CycJ family.

It is found in the cell inner membrane. Heme chaperone required for the biogenesis of c-type cytochromes. Transiently binds heme delivered by CcmC and transfers the heme to apo-cytochromes in a process facilitated by CcmF and CcmH. The chain is Cytochrome c-type biogenesis protein CcmE from Beijerinckia indica subsp. indica (strain ATCC 9039 / DSM 1715 / NCIMB 8712).